Here is a 269-residue protein sequence, read N- to C-terminus: tRNA (guanine-N(7)-)-methyltransferase (269 aa).

The disordered stretch occupies residues Met-1–Leu-38. Residues Glu-91, Glu-116, Asp-143, and Asp-166 each coordinate S-adenosyl-L-methionine. Asp-166 is a catalytic residue. Residues Lys-170, Asp-202, and Thr-247–Glu-250 each bind substrate.

The protein belongs to the class I-like SAM-binding methyltransferase superfamily. TrmB family.

The enzyme catalyses guanosine(46) in tRNA + S-adenosyl-L-methionine = N(7)-methylguanosine(46) in tRNA + S-adenosyl-L-homocysteine. It functions in the pathway tRNA modification; N(7)-methylguanine-tRNA biosynthesis. In terms of biological role, catalyzes the formation of N(7)-methylguanine at position 46 (m7G46) in tRNA. The sequence is that of tRNA (guanine-N(7)-)-methyltransferase from Nocardia farcinica (strain IFM 10152).